The following is a 332-amino-acid chain: 2,3-diketo-L-gulonate reductase (332 aa).

His-44 functions as the Proton donor in the catalytic mechanism. NAD(+) contacts are provided by residues 168–174 (ITMVDMS), 224–225 (WK), and 304–306 (GHE).

It belongs to the LDH2/MDH2 oxidoreductase family. DlgD subfamily. Homodimer.

The protein resides in the cytoplasm. The enzyme catalyses 3-dehydro-L-gulonate + NAD(+) = 2,3-dioxo-L-gulonate + NADH + H(+). The catalysed reaction is 3-dehydro-L-gulonate + NADP(+) = 2,3-dioxo-L-gulonate + NADPH + H(+). In terms of biological role, catalyzes the reduction of 2,3-diketo-L-gulonate in the presence of NADH, to form 3-keto-L-gulonate. The chain is 2,3-diketo-L-gulonate reductase from Shigella boydii serotype 4 (strain Sb227).